Reading from the N-terminus, the 557-residue chain is Potassium-transporting ATPase potassium-binding subunit (557 aa).

12 helical membrane-spanning segments follow: residues 5–25 (GFLL…PLGS), 63–83 (LSAI…MLLG), 132–152 (GLTV…FALI), 170–190 (LLRI…LFFI), 253–273 (FVQM…FGEV), 283–303 (LLWA…WAEV), 329–349 (VLVS…AVIA), 356–376 (ALGG…FGGV), 379–399 (GLYG…LMIG), 416–436 (LTAL…ALAM), 484–504 (LLAL…MAIA), and 526–546 (LFVG…FIPA).

Belongs to the KdpA family. As to quaternary structure, the system is composed of three essential subunits: KdpA, KdpB and KdpC.

The protein resides in the cell inner membrane. Part of the high-affinity ATP-driven potassium transport (or Kdp) system, which catalyzes the hydrolysis of ATP coupled with the electrogenic transport of potassium into the cytoplasm. This subunit binds the periplasmic potassium ions and delivers the ions to the membrane domain of KdpB through an intramembrane tunnel. The chain is Potassium-transporting ATPase potassium-binding subunit from Escherichia coli O6:H1 (strain CFT073 / ATCC 700928 / UPEC).